The primary structure comprises 433 residues: Transcription factor elt-2 (433 aa).

Disordered stretches follow at residues 1–47 (MDNN…ELPR) and 194–235 (GQPP…RQGL). Polar residues predominate over residues 27–43 (PTQNMDPPEQNNESQLS). Residues 211 to 234 (AKQSSKKSSSSNRGSNGSASRRQG) show a composition bias toward low complexity. Residues 237 to 261 (CSNCNGTNTTLWRRNAEGDPVCNAC) form a GATA-type zinc finger. The segment at 275–332 (SMKKEGALQTRKRKSKSGDSSTPSTSRARERKFERASSSTEKAQRSSNRRAGSAKADR) is disordered. Polar residues predominate over residues 310–324 (ASSSTEKAQRSSNRR).

As to quaternary structure, interacts with lag-1. Interacts with pha-4. Interacts with rpt-6. Post-translationally, may be ubiquitinated in response to infection by B.pseudomallei. In terms of tissue distribution, expressed in the intestine.

It localises to the nucleus. Functionally, transcriptional activator that binds to the consensus sequence 5'-[AT]GATA[AG]-3'. Predominantly directs the transcription of intestinal genes such as ges-1, cpr-6, pho-1, ftn-1, vit-2 and lev-11, and itself. Required for gut-specific differentiation, specifically acting with the GATA region-binding transcription factor elt-7 to control normal gene expression and promote normal formation of the intestine. Regulates intestinal gene expression in response to hypoxia to promote longevity. Modulation of longevity may, in part, be the result of regulation of expression of daf-16 isoforms d and f in the intestine. Regulates tissue specific gene expression at basal levels and in response to bacterial infection in the intestine to control innate immunity. Plays a role in the induction of metal-responsive genes, activating gene expression from zinc-activated promoters and iron-dependent promoters and enhancers. May regulate the expression of genes that control sensitivity to oxidative stress, in a mab-3-dependent manner, and osmotic stress, in conjunction with the GATA region-binding transcription factor elt-3. May play a role in sphingolipid signaling by regulating the expression of the sphingosine-1-phosphate degrading enzyme, sphingosine-1-phosphate lyase. May act with the Notch signaling pathway to promote endodermal gene expression. Has a protective role in response to infection by Gram-negative bacteria such as S.enterica, E.coli, P.aeruginosa and B.pseudomallei, Gram-positive bacterium E.faecalis and fungal pathogen C.neoformans. An association with the 26S proteasome regulatory subunit rpt-6, in part, controls gene expression in response to infection by P.aeruginosa. Regulates gene expression during the recovery phase following a bacterial infection. May act with p38-activated transcription factors to control p38 gene induction in response to bacterial infection. Controls lysosome formation in the intestine by controlling lysosomal gene expression. This is Transcription factor elt-2 from Caenorhabditis elegans.